The sequence spans 315 residues: Tubulin beta-1 chain (315 aa).

Residues serine 6, glycine 10, threonine 11, glycine 12, asparagine 72, and asparagine 94 each coordinate GTP. The tract at residues 295–315 (DATADEEEYYEDEEEEEAQGM) is disordered. Residues 297–315 (TADEEEYYEDEEEEEAQGM) are compositionally biased toward acidic residues.

The protein belongs to the tubulin family. Dimer of alpha and beta chains. A typical microtubule is a hollow water-filled tube with an outer diameter of 25 nm and an inner diameter of 15 nM. Alpha-beta heterodimers associate head-to-tail to form protofilaments running lengthwise along the microtubule wall with the beta-tubulin subunit facing the microtubule plus end conferring a structural polarity. Microtubules usually have 13 protofilaments but different protofilament numbers can be found in some organisms and specialized cells. Mg(2+) serves as cofactor.

It localises to the cytoplasm. Its subcellular location is the cytoskeleton. Its function is as follows. Tubulin is the major constituent of microtubules, a cylinder consisting of laterally associated linear protofilaments composed of alpha- and beta-tubulin heterodimers. Microtubules grow by the addition of GTP-tubulin dimers to the microtubule end, where a stabilizing cap forms. Below the cap, tubulin dimers are in GDP-bound state, owing to GTPase activity of alpha-tubulin. The protein is Tubulin beta-1 chain (TUBB1) of Daucus carota (Wild carrot).